The following is a 37-amino-acid chain: MITDVQLAIFANMLGVSLFLLVVLYHYVAVNNPKKQE.

Topologically, residues 1-4 (MITD) are lumenal. A helical transmembrane segment spans residues 5-25 (VQLAIFANMLGVSLFLLVVLY). The Cytoplasmic segment spans residues 26–37 (HYVAVNNPKKQE).

Belongs to the OST4 family. In terms of assembly, component of the oligosaccharyltransferase (OST) complex. OST exists in two different complex forms which contain common core subunits RPN1, RPN2, OST48, OST4, DAD1 and TMEM258, either STT3A or STT3B as catalytic subunits, and form-specific accessory subunits. STT3A complex assembly occurs through the formation of 3 subcomplexes. Subcomplex 1 contains RPN1 and TMEM258, subcomplex 2 contains the STT3A-specific subunits STT3A, DC2/OSTC, and KCP2 as well as the core subunit OST4, and subcomplex 3 contains RPN2, DAD1, and OST48. The STT3A complex can form stable complexes with the Sec61 complex or with both the Sec61 and TRAP complexes.

It is found in the endoplasmic reticulum. The protein resides in the endoplasmic reticulum membrane. Its pathway is protein modification; protein glycosylation. In terms of biological role, subunit of the oligosaccharyl transferase (OST) complex that catalyzes the initial transfer of a defined glycan (Glc(3)Man(9)GlcNAc(2) in eukaryotes) from the lipid carrier dolichol-pyrophosphate to an asparagine residue within an Asn-X-Ser/Thr consensus motif in nascent polypeptide chains, the first step in protein N-glycosylation. N-glycosylation occurs cotranslationally and the complex associates with the Sec61 complex at the channel-forming translocon complex that mediates protein translocation across the endoplasmic reticulum (ER). All subunits are required for a maximal enzyme activity. Specifically involved in maintaining stability of STT3A-containing OST complexes. The chain is Dolichyl-diphosphooligosaccharide--protein glycosyltransferase subunit 4 from Homo sapiens (Human).